We begin with the raw amino-acid sequence, 196 residues long: Glycerol-3-phosphate acyltransferase (196 aa).

A run of 4 helical transmembrane segments spans residues 4–24 (IYIA…GLIL), 70–90 (VLIA…LGAF), 111–131 (IGVL…LWLA), and 152–172 (IFLW…LTLL).

This sequence belongs to the PlsY family. As to quaternary structure, probably interacts with PlsX.

Its subcellular location is the cell inner membrane. It catalyses the reaction an acyl phosphate + sn-glycerol 3-phosphate = a 1-acyl-sn-glycero-3-phosphate + phosphate. The protein operates within lipid metabolism; phospholipid metabolism. Its function is as follows. Catalyzes the transfer of an acyl group from acyl-phosphate (acyl-PO(4)) to glycerol-3-phosphate (G3P) to form lysophosphatidic acid (LPA). This enzyme utilizes acyl-phosphate as fatty acyl donor, but not acyl-CoA or acyl-ACP. The sequence is that of Glycerol-3-phosphate acyltransferase from Rhodopseudomonas palustris (strain BisB5).